The chain runs to 418 residues: Hepatic and glial cell adhesion molecule (418 aa).

A signal peptide spans 1 to 33 (MKREREAPSRAFSALRLAPFVYLLLIQTEPLEG). Residues 34-141 (VNITSPVRLI…TGEKTINLTV (108 aa)) form the Ig-like V-type domain. Residues 34–240 (VNITSPVRLI…VKITVYRRSS (207 aa)) are Extracellular-facing. N-linked (GlcNAc...) asparagine glycans are attached at residues asparagine 35, asparagine 138, asparagine 167, and asparagine 189. The Ig-like C2-type domain maps to 148–234 (PQVLVASTTV…QGRSPPVKIT (87 aa)). A disulfide bridge links cysteine 168 with cysteine 217. A helical membrane pass occupies residues 241 to 261 (LYIILSTGGIFLLVTLVTVCA). Residues 262–418 (CWKPSKKSGK…DEAGPVEISA (157 aa)) are Cytoplasmic-facing. The interval 271 to 418 (KKRKLEKQNS…DEAGPVEISA (148 aa)) is disordered. Serine 280 carries the phosphoserine modification. Positions 287–308 (SDDRLKPEADTLPRSGEQERKN) are enriched in basic and acidic residues. Phosphoserine occurs at positions 352 and 379. Residues 385 to 400 (GSPGRSRSASRTLRTA) show a composition bias toward low complexity.

As to quaternary structure, homodimer. Dimer formation occurs predominantly through cis interactions on the cell surface. Part of a complex containing MLC1, TRPV4, AQP4 and ATP1B1. Interacts with CLCN2. In terms of processing, N-glycosylated.

The protein localises to the cytoplasm. The protein resides in the cell membrane. In terms of biological role, involved in regulating cell motility and cell-matrix interactions. May inhibit cell growth through suppression of cell proliferation. In glia, associates and targets CLCN2 at astrocytic processes and myelinated fiber tracts where it may regulate transcellular chloride flux involved in neuron excitability. This is Hepatic and glial cell adhesion molecule from Bos taurus (Bovine).